A 374-amino-acid chain; its full sequence is Glyceraldehyde-3-phosphate dehydrogenase A, chloroplastic (374 aa).

The transit peptide at 1–34 (MAAMMQKSAFTGSAVSSKSGVRAKAARAVVDVRA) directs the protein to the chloroplast. NADP(+) is bound by residues 47–48 (RI), Asp-71, and Arg-116. Cys-55 and Cys-325 are joined by a disulfide. Residues 189-191 (SCT), Thr-220, Arg-235, 248-249 (TG), and Arg-271 contribute to the D-glyceraldehyde 3-phosphate site. Cys-190 (nucleophile) is an active-site residue. Asn-353 provides a ligand contact to NADP(+).

This sequence belongs to the glyceraldehyde-3-phosphate dehydrogenase family. As to quaternary structure, homotetramer. Component of a complex that contains two dimers of PRK, two tetramers of GAPDH and CP12. CP12 associates with GAPDH, causing its conformation to change. This GAPDH/CP12 complex binds PRK to form a half-complex (one unit). This unit probably dimerizes due partially to interactions between the enzymes of each unit.

Its subcellular location is the plastid. It localises to the chloroplast. It carries out the reaction D-glyceraldehyde 3-phosphate + phosphate + NADP(+) = (2R)-3-phospho-glyceroyl phosphate + NADPH + H(+). It functions in the pathway carbohydrate biosynthesis; Calvin cycle. In Chlamydomonas reinhardtii (Chlamydomonas smithii), this protein is Glyceraldehyde-3-phosphate dehydrogenase A, chloroplastic (GAPA).